The chain runs to 459 residues: NADH-ubiquinone oxidoreductase chain 4 (459 aa).

13 helical membrane-spanning segments follow: residues 22–42 (MIWINTTTHSLIISIIPLLFF), 60–80 (PLTTPLLMLTTWLLPLTIMAS), 94–112 (LYLSMLISLQISLIMTFTA), 113–133 (TELIMFYIFFEATLIPTLVII), 145–165 (AGTYFLFYTLVGSLPLLIALI), 196–216 (WLAYTMAFMVKMPLYGLHLWL), 224–244 (PIAGSMMLAAVLLKLGGYGMM), 257–277 (MAYPFLALSLWGMIMTSSISL), 284–303 (SLIAYSSISHMALVVAAILI), 308–330 (SFTGAVVLMIAHGLTSSLLFCLA), 351–371 (LLPLMALWWLLASLANLALPP), 391–411 (TTLLLTGSNMLITALYSLYMF), and 435–455 (ILMFMHLSPILLLSLNPDIIT).

It belongs to the complex I subunit 4 family. Core subunit of respiratory chain NADH dehydrogenase (Complex I) which is composed of 45 different subunits.

The protein localises to the mitochondrion inner membrane. It catalyses the reaction a ubiquinone + NADH + 5 H(+)(in) = a ubiquinol + NAD(+) + 4 H(+)(out). Core subunit of the mitochondrial membrane respiratory chain NADH dehydrogenase (Complex I) which catalyzes electron transfer from NADH through the respiratory chain, using ubiquinone as an electron acceptor. Essential for the catalytic activity and assembly of complex I. The protein is NADH-ubiquinone oxidoreductase chain 4 (MT-ND4) of Gorilla gorilla gorilla (Western lowland gorilla).